Reading from the N-terminus, the 114-residue chain is UPF0339 protein plu2779 (114 aa).

Repeat copies occupy residues 11–59 (TKNK…NFEI) and 62–110 (NKSG…VRDL).

This sequence belongs to the UPF0339 family. Duplicated subfamily.

The chain is UPF0339 protein plu2779 from Photorhabdus laumondii subsp. laumondii (strain DSM 15139 / CIP 105565 / TT01) (Photorhabdus luminescens subsp. laumondii).